Consider the following 227-residue polypeptide: Phosphoribosylformylglycinamidine synthase subunit PurQ (227 aa).

The 223-residue stretch at 3–225 (FAVIVFPGSN…LKQWRETYVV (223 aa)) folds into the Glutamine amidotransferase type-1 domain. C86 acts as the Nucleophile in catalysis. Catalysis depends on residues H194 and E196.

Part of the FGAM synthase complex composed of 1 PurL, 1 PurQ and 2 PurS subunits.

The protein resides in the cytoplasm. It carries out the reaction N(2)-formyl-N(1)-(5-phospho-beta-D-ribosyl)glycinamide + L-glutamine + ATP + H2O = 2-formamido-N(1)-(5-O-phospho-beta-D-ribosyl)acetamidine + L-glutamate + ADP + phosphate + H(+). It catalyses the reaction L-glutamine + H2O = L-glutamate + NH4(+). Its pathway is purine metabolism; IMP biosynthesis via de novo pathway; 5-amino-1-(5-phospho-D-ribosyl)imidazole from N(2)-formyl-N(1)-(5-phospho-D-ribosyl)glycinamide: step 1/2. In terms of biological role, part of the phosphoribosylformylglycinamidine synthase complex involved in the purines biosynthetic pathway. Catalyzes the ATP-dependent conversion of formylglycinamide ribonucleotide (FGAR) and glutamine to yield formylglycinamidine ribonucleotide (FGAM) and glutamate. The FGAM synthase complex is composed of three subunits. PurQ produces an ammonia molecule by converting glutamine to glutamate. PurL transfers the ammonia molecule to FGAR to form FGAM in an ATP-dependent manner. PurS interacts with PurQ and PurL and is thought to assist in the transfer of the ammonia molecule from PurQ to PurL. This is Phosphoribosylformylglycinamidine synthase subunit PurQ from Bacillus mycoides (strain KBAB4) (Bacillus weihenstephanensis).